Reading from the N-terminus, the 159-residue chain is Ribosome maturation factor RimP (159 aa).

Belongs to the RimP family.

It localises to the cytoplasm. Functionally, required for maturation of 30S ribosomal subunits. The sequence is that of Ribosome maturation factor RimP from Streptococcus pneumoniae serotype 2 (strain D39 / NCTC 7466).